The sequence spans 364 residues: Variable large protein 21 (364 aa).

The signal sequence occupies residues 1-26 (MRKRISAIINKLNISIMMMIVVLMIG). C27 carries N-palmitoyl cysteine lipidation. Residue C27 is the site of S-diacylglycerol cysteine attachment.

The protein belongs to the variable large protein (Vlp) family. Alpha subfamily.

The protein resides in the cell outer membrane. The Vlp and Vsp proteins are antigenically distinct proteins, only one vlp or vsp gene is transcriptionally active at any one time. Switching between these genes is a mechanism of host immune response evasion. In Borrelia hermsii, this protein is Variable large protein 21.